The chain runs to 860 residues: Leucine--tRNA ligase (860 aa).

The short motif at 42 to 52 (PYPSGRLHMGH) is the 'HIGH' region element. Residues 619-623 (KMSKS) carry the 'KMSKS' region motif. An ATP-binding site is contributed by Lys-622.

This sequence belongs to the class-I aminoacyl-tRNA synthetase family.

It localises to the cytoplasm. It carries out the reaction tRNA(Leu) + L-leucine + ATP = L-leucyl-tRNA(Leu) + AMP + diphosphate. This is Leucine--tRNA ligase from Escherichia coli (strain K12 / MC4100 / BW2952).